We begin with the raw amino-acid sequence, 147 residues long: Flagellar assembly factor FliW (147 aa).

The protein belongs to the FliW family. In terms of assembly, interacts with translational regulator CsrA and flagellin(s).

Its subcellular location is the cytoplasm. In terms of biological role, acts as an anti-CsrA protein, binds CsrA and prevents it from repressing translation of its target genes, one of which is flagellin. Binds to flagellin and participates in the assembly of the flagellum. This is Flagellar assembly factor FliW from Chromobacterium violaceum (strain ATCC 12472 / DSM 30191 / JCM 1249 / CCUG 213 / NBRC 12614 / NCIMB 9131 / NCTC 9757 / MK).